We begin with the raw amino-acid sequence, 376 residues long: DNA-directed RNA polymerase subunit alpha (376 aa).

The interval 1-259 is alpha N-terminal domain (alpha-NTD); it reads MSDCSQNLLY…KHFSIFEKMD (259 aa). The alpha C-terminal domain (alpha-CTD) stretch occupies residues 276-376; the sequence is KDDILHKLVL…DKIRSKNGKG (101 aa).

It belongs to the RNA polymerase alpha chain family. As to quaternary structure, homodimer. The RNAP catalytic core consists of 2 alpha, 1 beta, 1 beta' and 1 omega subunit. When a sigma factor is associated with the core the holoenzyme is formed, which can initiate transcription.

The catalysed reaction is RNA(n) + a ribonucleoside 5'-triphosphate = RNA(n+1) + diphosphate. Its function is as follows. DNA-dependent RNA polymerase catalyzes the transcription of DNA into RNA using the four ribonucleoside triphosphates as substrates. The polypeptide is DNA-directed RNA polymerase subunit alpha (Chlamydia abortus (strain DSM 27085 / S26/3) (Chlamydophila abortus)).